Consider the following 317-residue polypeptide: Probable cell division protein WhiA (317 aa).

The H-T-H motif DNA-binding region spans 281 to 314 (SLKELGKMLEPPVGKSGVNHRLRKIEKIAEELRK).

It belongs to the WhiA family.

Functionally, involved in cell division and chromosome segregation. This chain is Probable cell division protein WhiA, found in Clostridium acetobutylicum (strain ATCC 824 / DSM 792 / JCM 1419 / IAM 19013 / LMG 5710 / NBRC 13948 / NRRL B-527 / VKM B-1787 / 2291 / W).